The sequence spans 522 residues: Tetratricopeptide repeat and J domain-containing co-chaperone DNJ1 (522 aa).

The signal sequence occupies residues 1–22 (MKGFLLVALPVLFLSLSTQVFG). 7 TPR repeats span residues 29 to 62 (AAQI…DPTG), 63 to 96 (YANY…NPGF), 97 to 130 (VQAH…KSDS), 142 to 175 (GEAA…GPNS), 210 to 243 (TYLP…DPDS), 256 to 289 (LEKD…LVRF), and 356 to 389 (VDSW…SGRS). The J domain occupies 410–471 (DYYKVLGVPR…ELRQRYDNGD (62 aa)). Residues 465 to 494 (QRYDNGDDPNDPTGGQQHNPFAHHGGGMPF) form a disordered region.

The protein localises to the endoplasmic reticulum lumen. In terms of biological role, endoplasmic reticulum co-chaperone crucial for survival and virulence factor production at elevated temperatures representative of febrile patients during infection. Contributes to virulence in a mouse model of cryptococcosis. With chaperone CNE1, coordinately maintains ER homeostasis and contributes to maintenance of cell wall architecture. The protein is Tetratricopeptide repeat and J domain-containing co-chaperone DNJ1 of Cryptococcus neoformans var. grubii serotype A (strain H99 / ATCC 208821 / CBS 10515 / FGSC 9487) (Filobasidiella neoformans var. grubii).